A 624-amino-acid polypeptide reads, in one-letter code: DNA-directed RNA polymerase III subunit rpc-3 (624 aa).

Disordered stretches follow at residues 229-260 (KRKL…EEDL) and 373-418 (LAPK…ARMS). A compositionally biased stretch (acidic residues) spans 385–403 (DDSDDDEEDGDYSDSDEEM). Residues 551–572 (CYATMVHCLQVLEVRRQKDKDV) are leucine-zipper.

It belongs to the RNA polymerase beta chain family. In terms of assembly, component of the RNA polymerase III (Pol III) complex consisting of 17 subunits.

The protein localises to the nucleus. Its function is as follows. DNA-dependent RNA polymerase catalyzes the transcription of DNA into RNA using the four ribonucleoside triphosphates as substrates. Specific core component of RNA polymerase III which synthesizes small RNAs, such as 5S rRNA and tRNAs. This Neurospora crassa (strain ATCC 24698 / 74-OR23-1A / CBS 708.71 / DSM 1257 / FGSC 987) protein is DNA-directed RNA polymerase III subunit rpc-3 (rpc-82).